The following is a 187-amino-acid chain: MMKMKTLLALAISGICAAGVANAHDHMAKPAGPSIEVKVQQLDPANGNKDVGTVTITESNYGLVFTPNLQGLAEGLHGFHIHENPSCDPKEKDGKLTSGLAAGGHWDPKGAKQHGYPWQDDAHLGDLPALTVLHDGTATNPVLAPRLKKLDEVRGHSIMIHAGGDNHSDHPAPLGGGGPRMACGVIK.

The N-terminal stretch at methionine 1 to alanine 23 is a signal peptide. Cu cation contacts are provided by histidine 80, histidine 82, and histidine 105. Residues cysteine 87 and cysteine 183 are joined by a disulfide bond. 4 residues coordinate Zn(2+): histidine 105, histidine 114, histidine 123, and aspartate 126. Histidine 161 contacts Cu cation.

It belongs to the Cu-Zn superoxide dismutase family. In terms of assembly, homodimer. Cu cation serves as cofactor. The cofactor is Zn(2+).

It is found in the periplasm. The enzyme catalyses 2 superoxide + 2 H(+) = H2O2 + O2. In terms of biological role, destroys radicals which are normally produced within the cells and which are toxic to biological systems. Its function is as follows. May confer survival advantage by accelerating dismutation of superoxide of environmental origin to hydrogen peroxide, disruptive to the normal mucociliary clearance process in the host. The protein is Superoxide dismutase [Cu-Zn] (sodC) of Haemophilus parainfluenzae.